A 222-amino-acid polypeptide reads, in one-letter code: Superoxide dismutase [Mn], mitochondrial (222 aa).

The transit peptide at 1–24 (MLCRAACSTSRKLVPALGSLGSRQ) directs the protein to the mitochondrion. A Mn(2+)-binding site is contributed by His50. At Tyr58 the chain carries 3'-nitrotyrosine. An N6-acetyllysine; alternate mark is found at Lys68 and Lys75. An N6-succinyllysine; alternate mark is found at Lys68 and Lys75. His98 serves as a coordination point for Mn(2+). N6-acetyllysine is present on Lys114. Residues Lys122 and Lys130 each carry the N6-acetyllysine; alternate modification. Residues Lys122 and Lys130 each carry the N6-succinyllysine; alternate modification. Residues Asp183 and His187 each contribute to the Mn(2+) site. Residue Lys202 is modified to N6-acetyllysine.

It belongs to the iron/manganese superoxide dismutase family. As to quaternary structure, homotetramer. The cofactor is Mn(2+). In terms of processing, nitrated under oxidative stress. Nitration coupled with oxidation inhibits the catalytic activity. Acetylation at Lys-122 decreases enzymatic activity. Deacetylated by SIRT3 upon exposure to ionizing radiations or after long fasting. Post-translationally, polyubiquitinated; leading to proteasomal degradation. Deubiquitinated by USP36 which increases protein stability.

It is found in the mitochondrion matrix. The catalysed reaction is 2 superoxide + 2 H(+) = H2O2 + O2. Destroys superoxide anion radicals which are normally produced within the cells and which are toxic to biological systems. The chain is Superoxide dismutase [Mn], mitochondrial (SOD2) from Equus caballus (Horse).